The chain runs to 168 residues: Photosystem I assembly protein Ycf3 (168 aa).

3 TPR repeats span residues 35–68 (AFAYYINGMSAQSEGNYAEALQNYYQAMHLEMDP), 72–105 (SYILYNIGIIHTSNGEHSKALEYYCRAIERNPFL), and 120–153 (GEQAIQQGDSEIAEAWFDQAAEYWKQARTLTPGN).

Belongs to the Ycf3 family.

The protein resides in the plastid membrane. Essential for the assembly of the photosystem I (PSI) complex. May act as a chaperone-like factor to guide the assembly of the PSI subunits. The sequence is that of Photosystem I assembly protein Ycf3 from Cuscuta gronovii (Common dodder).